Consider the following 437-residue polypeptide: Enolase (437 aa).

Substrate contacts are provided by histidine 160 and glutamate 169. The active-site Proton donor is glutamate 212. Residues aspartate 247, glutamate 296, and aspartate 321 each contribute to the Mg(2+) site. 2 residues coordinate substrate: glutamate 296 and aspartate 321. The Proton acceptor role is filled by lysine 346. Substrate is bound by residues serine 373–serine 376 and lysine 397.

This sequence belongs to the enolase family. In terms of assembly, homodimer. The cofactor is Mg(2+).

It is found in the cytoplasm. The enzyme catalyses (2R)-2-phosphoglycerate = phosphoenolpyruvate + H2O. It participates in carbohydrate degradation; glycolysis; pyruvate from D-glyceraldehyde 3-phosphate: step 4/5. The sequence is that of Enolase (ENO) from Eremothecium gossypii (strain ATCC 10895 / CBS 109.51 / FGSC 9923 / NRRL Y-1056) (Yeast).